A 232-amino-acid chain; its full sequence is Large ribosomal subunit protein uL1 (232 aa).

Belongs to the universal ribosomal protein uL1 family. As to quaternary structure, part of the 50S ribosomal subunit.

Its function is as follows. Binds directly to 23S rRNA. The L1 stalk is quite mobile in the ribosome, and is involved in E site tRNA release. Functionally, protein L1 is also a translational repressor protein, it controls the translation of the L11 operon by binding to its mRNA. In Aliarcobacter butzleri (strain RM4018) (Arcobacter butzleri), this protein is Large ribosomal subunit protein uL1.